We begin with the raw amino-acid sequence, 206 residues long: Thymidylate kinase (206 aa).

Residue 10-17 (GVDGVGKT) participates in ATP binding.

The protein belongs to the thymidylate kinase family.

The enzyme catalyses dTMP + ATP = dTDP + ADP. In terms of biological role, phosphorylation of dTMP to form dTDP in both de novo and salvage pathways of dTTP synthesis. This Bifidobacterium longum (strain DJO10A) protein is Thymidylate kinase.